The sequence spans 613 residues: DBH-like monooxygenase protein 1 (613 aa).

The first 19 residues, 1-19, serve as a signal peptide directing secretion; sequence MCCWPLLLLWGLLPGTAAG. At 20-592 the chain is on the lumenal side; that stretch reads GSGRTYPHRT…TSSSSSLHRD (573 aa). Residues 35–148 enclose the DOMON domain; the sequence is GKYWLGWSQR…STVRVIWAYH (114 aa). A glycan (N-linked (GlcNAc...) asparagine) is linked at Asn-114. Residue Tyr-203 is part of the active site. 2 disulfide bridges follow: Cys-205–Cys-257 and Cys-242–Cys-269. Positions 235 and 236 each coordinate Cu cation. Asn-247 carries an N-linked (GlcNAc...) asparagine glycan. His-307, His-389, His-391, and Met-464 together coordinate Cu cation. Disulfide bonds link Cys-364/Cys-480, Cys-368/Cys-550, and Cys-443/Cys-465. Residue His-389 is part of the active site. N-linked (GlcNAc...) asparagine glycosylation is found at Asn-476 and Asn-517. A helical transmembrane segment spans residues 593–613; it reads FSINLLVCLLLLSCTLSTKSL.

It belongs to the copper type II ascorbate-dependent monooxygenase family. Cu(2+) is required as a cofactor. N-glycosylated. As to expression, highly expressed in lung, kidney, brain and spinal cord.

The protein resides in the endoplasmic reticulum membrane. The polypeptide is DBH-like monooxygenase protein 1 (MOXD1) (Homo sapiens (Human)).